The sequence spans 508 residues: Photosystem II CP47 reaction center protein (508 aa).

The next 6 helical transmembrane spans lie at 21-36 (AVHI…WAGS), 101-115 (IVFS…IWHW), 140-156 (GIHL…FGAF), 203-218 (IAAG…FHLS), 237-252 (VLSS…AFVV), and 457-472 (TFAL…HGAR).

Belongs to the PsbB/PsbC family. PsbB subfamily. In terms of assembly, PSII is composed of 1 copy each of membrane proteins PsbA, PsbB, PsbC, PsbD, PsbE, PsbF, PsbH, PsbI, PsbJ, PsbK, PsbL, PsbM, PsbT, PsbX, PsbY, PsbZ, Psb30/Ycf12, at least 3 peripheral proteins of the oxygen-evolving complex and a large number of cofactors. It forms dimeric complexes. The cofactor is Binds multiple chlorophylls. PSII binds additional chlorophylls, carotenoids and specific lipids..

The protein localises to the plastid. It localises to the chloroplast thylakoid membrane. Functionally, one of the components of the core complex of photosystem II (PSII). It binds chlorophyll and helps catalyze the primary light-induced photochemical processes of PSII. PSII is a light-driven water:plastoquinone oxidoreductase, using light energy to abstract electrons from H(2)O, generating O(2) and a proton gradient subsequently used for ATP formation. This chain is Photosystem II CP47 reaction center protein, found in Triticum aestivum (Wheat).